We begin with the raw amino-acid sequence, 375 residues long: Succinyl-diaminopimelate desuccinylase (375 aa).

Position 66 (histidine 66) interacts with Zn(2+). Aspartate 68 is an active-site residue. Zn(2+) is bound at residue aspartate 99. The active-site Proton acceptor is the glutamate 133. Residues glutamate 134, glutamate 162, and histidine 348 each contribute to the Zn(2+) site.

It belongs to the peptidase M20A family. DapE subfamily. Homodimer. The cofactor is Zn(2+). Requires Co(2+) as cofactor.

It carries out the reaction N-succinyl-(2S,6S)-2,6-diaminopimelate + H2O = (2S,6S)-2,6-diaminopimelate + succinate. The protein operates within amino-acid biosynthesis; L-lysine biosynthesis via DAP pathway; LL-2,6-diaminopimelate from (S)-tetrahydrodipicolinate (succinylase route): step 3/3. Its function is as follows. Catalyzes the hydrolysis of N-succinyl-L,L-diaminopimelic acid (SDAP), forming succinate and LL-2,6-diaminopimelate (DAP), an intermediate involved in the bacterial biosynthesis of lysine and meso-diaminopimelic acid, an essential component of bacterial cell walls. In Herminiimonas arsenicoxydans, this protein is Succinyl-diaminopimelate desuccinylase.